A 397-amino-acid chain; its full sequence is DnaJ homolog subfamily A member 1 (397 aa).

Residues 6-68 (TYYDVLGVKP…KKRELYDKGG (63 aa)) form the J domain. K66 bears the N6-acetyllysine mark. S83 is subject to Phosphoserine. The CR-type zinc-finger motif lies at 121 to 205 (GATRKLALQK…CNGRKIVREK (85 aa)). Residues C134, C137, C150, C153, C177, C180, C193, and C196 each contribute to the Zn(2+) site. 4 CXXCXGXG motif repeats span residues 134-141 (CDKCEGRG), 150-157 (CPNCRGTG), 177-184 (CMECQGHG), and 193-200 (CKSCNGRK). S335 is subject to Phosphoserine. A disordered region spans residues 352 to 397 (VEETDEMDQVELVDFDPNQERRRHYNGEAYEDDEHHPRGGVQCQTS). Over residues 353-365 (EETDEMDQVELVD) the composition is skewed to acidic residues. Phosphotyrosine is present on Y381. C394 carries the cysteine methyl ester modification. Residue C394 is the site of S-farnesyl cysteine attachment. Positions 395-397 (QTS) are cleaved as a propeptide — removed in mature form.

In terms of assembly, identified in a complex with HSPA1B and BAX. Interacts with RNF207.

It is found in the membrane. Its subcellular location is the cytoplasm. The protein localises to the microsome. It localises to the mitochondrion. The protein resides in the nucleus. It is found in the perinuclear region. Functionally, co-chaperone for HSPA8/Hsc70. Plays a role in protein transport into mitochondria via its role as co-chaperone. Functions as co-chaperone for HSPA1B and negatively regulates the translocation of BAX from the cytosol to mitochondria in response to cellular stress, thereby protecting cells against apoptosis. Stimulates ATP hydrolysis, but not the folding of unfolded proteins mediated by HSPA1A (in vitro). Promotes apoptosis in response to cellular stress mediated by exposure to anisomycin or UV. The chain is DnaJ homolog subfamily A member 1 (DNAJA1) from Bos taurus (Bovine).